Reading from the N-terminus, the 630-residue chain is Multidrug transporter TPO3 (630 aa).

Positions 1–35 (MVDQESLVSFSSETSQSINSDIDIESQQQPRQYIP) are enriched in polar residues. 2 disordered regions span residues 1–46 (MVDQ…KERL) and 107–157 (TSTA…NQQP). The span at 37–46 (NEKDGNKERL) shows a compositional bias: basic and acidic residues. The segment covering 125 to 137 (RRSQNIAASSNSS) has biased composition (low complexity). Asn-135 carries an N-linked (GlcNAc...) asparagine glycan. Transmembrane regions (helical) follow at residues 190 to 210 (ILSC…GGLF), 222 to 242 (AAIL…LIWS), 252 to 272 (LAYF…ALSP), 282 to 302 (FLCG…IADM), 312 to 332 (IAFF…VNGF), 342 to 362 (LIFW…AFIP), 423 to 443 (FYVC…PVVF), 453 to 473 (LIGL…ATTF), 494 to 514 (LFGA…LGAT), 519 to 539 (IIWV…VLIY), 553 to 575 (YASS…FPLF), and 587 to 607 (WASW…FGFY).

Belongs to the major facilitator superfamily. DHA1 family. Polyamines/proton antiporter (TC 2.A.1.2.16) subfamily.

Its subcellular location is the cell membrane. Functionally, cell membrane polyamine/proton antiporter, involved in the detoxification of excess polyamines in the cytoplasm. Involved in the resistance to the imidazole antifungal drugs tioconazole, miconazole, clotrimazole and ketoconazole; to the triazole fluconazole; but not to the antifungals flucytosine or amphotericin B. Plays a role in spermine homeostasis, but spermine accumulation in response to clotrimazole is independent of TPO3. The polypeptide is Multidrug transporter TPO3 (Candida glabrata (strain ATCC 2001 / BCRC 20586 / JCM 3761 / NBRC 0622 / NRRL Y-65 / CBS 138) (Yeast)).